We begin with the raw amino-acid sequence, 528 residues long: Glutamyl-tRNA(Gln) amidotransferase subunit B, mitochondrial (528 aa).

The transit peptide at 1–21 (MSWRLSFRTNLLIYNVRRRNY) directs the protein to the mitochondrion.

Belongs to the GatB/GatE family. GatB subfamily. As to quaternary structure, subunit of the heterotrimeric GatCAB amidotransferase (AdT) complex, composed of A, B and C subunits.

Its subcellular location is the mitochondrion. It carries out the reaction L-glutamyl-tRNA(Gln) + L-glutamine + ATP + H2O = L-glutaminyl-tRNA(Gln) + L-glutamate + ADP + phosphate + H(+). Allows the formation of correctly charged Gln-tRNA(Gln) through the transamidation of misacylated Glu-tRNA(Gln) in the mitochondria. The reaction takes place in the presence of glutamine and ATP through an activated gamma-phospho-Glu-tRNA(Gln). This is Glutamyl-tRNA(Gln) amidotransferase subunit B, mitochondrial from Aedes aegypti (Yellowfever mosquito).